A 492-amino-acid polypeptide reads, in one-letter code: Proline--tRNA ligase (492 aa).

Belongs to the class-II aminoacyl-tRNA synthetase family. ProS type 3 subfamily. Homodimer.

It localises to the cytoplasm. It catalyses the reaction tRNA(Pro) + L-proline + ATP = L-prolyl-tRNA(Pro) + AMP + diphosphate. Catalyzes the attachment of proline to tRNA(Pro) in a two-step reaction: proline is first activated by ATP to form Pro-AMP and then transferred to the acceptor end of tRNA(Pro). This chain is Proline--tRNA ligase, found in Flavobacterium johnsoniae (strain ATCC 17061 / DSM 2064 / JCM 8514 / BCRC 14874 / CCUG 350202 / NBRC 14942 / NCIMB 11054 / UW101) (Cytophaga johnsonae).